The primary structure comprises 101 residues: Small ribosomal subunit protein uS14 (101 aa).

The protein belongs to the universal ribosomal protein uS14 family. In terms of assembly, part of the 30S ribosomal subunit. Contacts proteins S3 and S10.

Binds 16S rRNA, required for the assembly of 30S particles and may also be responsible for determining the conformation of the 16S rRNA at the A site. This Brucella abortus (strain S19) protein is Small ribosomal subunit protein uS14.